A 345-amino-acid polypeptide reads, in one-letter code: OVARIAN TUMOR DOMAIN-containing deubiquitinating enzyme 9 (345 aa).

The region spanning L204–E328 is the OTU domain. D212 is an active-site residue. The Nucleophile role is filled by C215. The active site involves H321.

It belongs to the peptidase C85 family.

The catalysed reaction is Thiol-dependent hydrolysis of ester, thioester, amide, peptide and isopeptide bonds formed by the C-terminal Gly of ubiquitin (a 76-residue protein attached to proteins as an intracellular targeting signal).. In terms of biological role, hydrolase that can remove conjugated ubiquitin from proteins in vitro and may therefore play an important regulatory role at the level of protein turnover by preventing degradation. Cysteine protease with a preference for 'Lys-63' and 'Lys-48' -linked ubiquitin (UB) tetramers as substrates. Also cleaves RUB-GST fusion. The polypeptide is OVARIAN TUMOR DOMAIN-containing deubiquitinating enzyme 9 (Arabidopsis thaliana (Mouse-ear cress)).